Consider the following 284-residue polypeptide: D-tagatose-1,6-bisphosphate aldolase subunit GatY (284 aa).

The Proton donor role is filled by Asp-82. Residues His-83 and His-180 each coordinate Zn(2+). Position 181 (Gly-181) interacts with dihydroxyacetone phosphate. His-208 provides a ligand contact to Zn(2+). Dihydroxyacetone phosphate contacts are provided by residues Gly-209 to Ser-211 and Asn-230 to Thr-233.

Belongs to the class II fructose-bisphosphate aldolase family. TagBP aldolase GatY subfamily. Forms a complex with GatZ. The cofactor is Zn(2+).

The enzyme catalyses D-tagatofuranose 1,6-bisphosphate = D-glyceraldehyde 3-phosphate + dihydroxyacetone phosphate. It participates in carbohydrate metabolism; D-tagatose 6-phosphate degradation; D-glyceraldehyde 3-phosphate and glycerone phosphate from D-tagatose 6-phosphate: step 2/2. Its function is as follows. Catalytic subunit of the tagatose-1,6-bisphosphate aldolase GatYZ, which catalyzes the reversible aldol condensation of dihydroxyacetone phosphate (DHAP or glycerone-phosphate) with glyceraldehyde 3-phosphate (G3P) to produce tagatose 1,6-bisphosphate (TBP). Requires GatZ subunit for full activity and stability. Is involved in the catabolism of galactitol. The polypeptide is D-tagatose-1,6-bisphosphate aldolase subunit GatY (Escherichia coli O6:K15:H31 (strain 536 / UPEC)).